The following is a 461-amino-acid chain: tRNA modification GTPase MnmE (461 aa).

(6S)-5-formyl-5,6,7,8-tetrahydrofolate is bound by residues Arg-22, Glu-87, and Arg-126. The region spanning 222 to 382 is the TrmE-type G domain; the sequence is GITAVIAGKP…LENKLYEILI (161 aa). Asn-232 provides a ligand contact to K(+). Residues 232–237, 251–257, 276–279, and 363–365 each bind GTP; these read NVGKSS, TDIPGTT, DTAG, and SAR. Ser-236 contacts Mg(2+). Thr-251, Ile-253, and Thr-256 together coordinate K(+). Position 257 (Thr-257) interacts with Mg(2+). Lys-461 lines the (6S)-5-formyl-5,6,7,8-tetrahydrofolate pocket.

It belongs to the TRAFAC class TrmE-Era-EngA-EngB-Septin-like GTPase superfamily. TrmE GTPase family. As to quaternary structure, homodimer. Heterotetramer of two MnmE and two MnmG subunits. K(+) serves as cofactor.

It localises to the cytoplasm. Exhibits a very high intrinsic GTPase hydrolysis rate. Involved in the addition of a carboxymethylaminomethyl (cmnm) group at the wobble position (U34) of certain tRNAs, forming tRNA-cmnm(5)s(2)U34. This Carboxydothermus hydrogenoformans (strain ATCC BAA-161 / DSM 6008 / Z-2901) protein is tRNA modification GTPase MnmE.